The following is a 421-amino-acid chain: Alpha-1-antiproteinase 2 (421 aa).

The first 24 residues, M1–A24, serve as a signal peptide directing secretion. Residues N73, N110, and N274 are each glycosylated (N-linked (GlcNAc...) asparagine). The RCL stretch occupies residues G376–R395.

Belongs to the serpin family. In terms of processing, N-glycosylated with carbohydrates having biantennary side chains. As to expression, plasma.

It is found in the secreted. Functionally, inhibitor of serine proteases. The protein is Alpha-1-antiproteinase 2 of Equus caballus (Horse).